We begin with the raw amino-acid sequence, 190 residues long: Elongation factor P-like protein (190 aa).

This sequence belongs to the elongation factor P family.

The polypeptide is Elongation factor P-like protein (Shigella dysenteriae serotype 1 (strain Sd197)).